Here is a 779-residue protein sequence, read N- to C-terminus: MTASTRNGSPSPSPAAPTATEQESKSMTTTPANPPETKSQTNGKGSGTAQSSQKPASTSANAKDPLRPRRKKAKRACFACQRAHLTCGDERPCQRCIKRGLQDACHDGVRKKAKYLHDAPNEALLPGIRGNYYNQANTTRNIPNQRGNASNSNSNKVSRQSVSSANFYTPQAARSYNVYVQAKSQQSHVRPAVMQDASMNPSVFHAQSPSSTQNFDLSSNPQTQNLSSAMSQTASSVSGQNQDPFGAAFFDPSHPALFNFDIASMNFGNRYGALEFGMLGHMATGAGDTPPSDSATQRGSIGRSSGTFTAQNFGDSANNQSPFLFGDPVLNDWNPTGQGQANPRNIYNQNAVAGQMGEQNPHAFAIESAPMNFASPSSTESPQMTTTTPFDEANANFSSRTNLMHPTNTPQQSRISTPGLKHQGLHVGVKRRYRSPSSIYESVKEPYSYTSGFHSLTAFIQRRFSPQKTLQIAKALASIRPSFIATTKTLNQDDLIFMEKCFQRTLWEYEDFINACGTPTIVCRRTGEIAAVGKEFSILTGWKKEVLLGKEPNLNVNTGSSLSSASSVRGSSTFTPRNNNTHNSIDPHTGMPTVGGGGASGRTQPVFLAELLDDDSVIEFYEDFAKLAFGDSRGSVMTTCKLLKYKTKEDSAALFHGKEETQQGGVDGSSGTGTTTSGDVATTTATGTSTSNGANANTNGNNTNPNDPSSAASSSASSALQGPQQSPRQTWGKRGIAGEAGMNQLGFRDGKVECSYCWTVKRDVFDIPMLIVMNFLPCI.

Residues 1 to 70 form a disordered region; the sequence is MTASTRNGSP…NAKDPLRPRR (70 aa). The segment covering 25–61 has biased composition (polar residues); it reads KSMTTTPANPPETKSQTNGKGSGTAQSSQKPASTSAN. The zn(2)-C6 fungal-type DNA-binding region spans 77-105; that stretch reads CFACQRAHLTCGDERPCQRCIKRGLQDAC. Disordered regions lie at residues 135-163, 202-239, 285-344, 401-421, 559-590, and 655-732; these read QANTTRNIPNQRGNASNSNSNKVSRQSVS, SVFHAQSPSSTQNFDLSSNPQTQNLSSAMSQTASSVSG, GAGD…ANPR, TNLMHPTNTPQQSRISTPGLK, GSSLSSASSVRGSSTFTPRNNNTHNSIDPHTG, and FHGK…QTWG. Over residues 202–226 the composition is skewed to polar residues; the sequence is SVFHAQSPSSTQNFDLSSNPQTQNL. Low complexity predominate over residues 227-238; it reads SSAMSQTASSVS. 3 stretches are compositionally biased toward polar residues: residues 291 to 322, 333 to 344, and 401 to 416; these read PSDSATQRGSIGRSSGTFTAQNFGDSANNQSP, WNPTGQGQANPR, and TNLMHPTNTPQQSRIS. Residues 560–572 show a composition bias toward low complexity; sequence SSLSSASSVRGSS. Residues 573 to 586 are compositionally biased toward polar residues; it reads TFTPRNNNTHNSID. Over residues 672–719 the composition is skewed to low complexity; that stretch reads TGTTTSGDVATTTATGTSTSNGANANTNGNNTNPNDPSSAASSSASSA. A compositionally biased stretch (polar residues) spans 720 to 729; that stretch reads LQGPQQSPRQ.

The protein belongs to the ERT1/acuK family.

It is found in the nucleus. Transcription factor which regulates nonfermentable carbon utilization. Activator of gluconeogenetic genes. This is Transcription activator of gluconeogenesis BDCG_02812 from Ajellomyces dermatitidis (strain ER-3 / ATCC MYA-2586) (Blastomyces dermatitidis).